Here is a 354-residue protein sequence, read N- to C-terminus: GTPase Obg (354 aa).

The Obg domain maps to 1-159 (MKFVDEVKIH…RDLVLELKLL (159 aa)). Positions 160 to 333 (ADVGIVGYPN…LLDAVGRALF (174 aa)) constitute an OBG-type G domain. GTP-binding positions include 166-173 (GYPNAGKS), 191-195 (FTTLT), 212-215 (DIPG), 283-286 (TKID), and 314-316 (SAV). Ser-173 and Thr-193 together coordinate Mg(2+).

It belongs to the TRAFAC class OBG-HflX-like GTPase superfamily. OBG GTPase family. Monomer. Mg(2+) is required as a cofactor.

The protein localises to the cytoplasm. In terms of biological role, an essential GTPase which binds GTP, GDP and possibly (p)ppGpp with moderate affinity, with high nucleotide exchange rates and a fairly low GTP hydrolysis rate. Plays a role in control of the cell cycle, stress response, ribosome biogenesis and in those bacteria that undergo differentiation, in morphogenesis control. The chain is GTPase Obg from Anaeromyxobacter sp. (strain K).